We begin with the raw amino-acid sequence, 353 residues long: UDP-N-acetylglucosamine--N-acetylmuramyl-(pentapeptide) pyrophosphoryl-undecaprenol N-acetylglucosamine transferase (353 aa).

UDP-N-acetyl-alpha-D-glucosamine-binding positions include 10–12 (TGG), N124, S183, and Q283.

This sequence belongs to the glycosyltransferase 28 family. MurG subfamily.

It is found in the cell inner membrane. The catalysed reaction is di-trans,octa-cis-undecaprenyl diphospho-N-acetyl-alpha-D-muramoyl-L-alanyl-D-glutamyl-meso-2,6-diaminopimeloyl-D-alanyl-D-alanine + UDP-N-acetyl-alpha-D-glucosamine = di-trans,octa-cis-undecaprenyl diphospho-[N-acetyl-alpha-D-glucosaminyl-(1-&gt;4)]-N-acetyl-alpha-D-muramoyl-L-alanyl-D-glutamyl-meso-2,6-diaminopimeloyl-D-alanyl-D-alanine + UDP + H(+). It functions in the pathway cell wall biogenesis; peptidoglycan biosynthesis. Functionally, cell wall formation. Catalyzes the transfer of a GlcNAc subunit on undecaprenyl-pyrophosphoryl-MurNAc-pentapeptide (lipid intermediate I) to form undecaprenyl-pyrophosphoryl-MurNAc-(pentapeptide)GlcNAc (lipid intermediate II). In Helicobacter pylori (strain HPAG1), this protein is UDP-N-acetylglucosamine--N-acetylmuramyl-(pentapeptide) pyrophosphoryl-undecaprenol N-acetylglucosamine transferase.